The following is a 473-amino-acid chain: Bifunctional protein HldE (473 aa).

Residues 1–317 (MKLSMPRFDQ…RRAVQREQGS (317 aa)) form a ribokinase region. 194–197 (NLSE) contributes to the ATP binding site. D263 is an active-site residue. Residues 343-473 (FTNGCFDILH…TAIVEKIRQR (131 aa)) form a cytidylyltransferase region.

The protein in the N-terminal section; belongs to the carbohydrate kinase PfkB family. In the C-terminal section; belongs to the cytidylyltransferase family. In terms of assembly, homodimer.

It catalyses the reaction D-glycero-beta-D-manno-heptose 7-phosphate + ATP = D-glycero-beta-D-manno-heptose 1,7-bisphosphate + ADP + H(+). It carries out the reaction D-glycero-beta-D-manno-heptose 1-phosphate + ATP + H(+) = ADP-D-glycero-beta-D-manno-heptose + diphosphate. The protein operates within nucleotide-sugar biosynthesis; ADP-L-glycero-beta-D-manno-heptose biosynthesis; ADP-L-glycero-beta-D-manno-heptose from D-glycero-beta-D-manno-heptose 7-phosphate: step 1/4. Its pathway is nucleotide-sugar biosynthesis; ADP-L-glycero-beta-D-manno-heptose biosynthesis; ADP-L-glycero-beta-D-manno-heptose from D-glycero-beta-D-manno-heptose 7-phosphate: step 3/4. In terms of biological role, catalyzes the phosphorylation of D-glycero-D-manno-heptose 7-phosphate at the C-1 position to selectively form D-glycero-beta-D-manno-heptose-1,7-bisphosphate. Catalyzes the ADP transfer from ATP to D-glycero-beta-D-manno-heptose 1-phosphate, yielding ADP-D-glycero-beta-D-manno-heptose. The sequence is that of Bifunctional protein HldE from Pseudomonas aeruginosa (strain LESB58).